Consider the following 506-residue polypeptide: MTDQSPAPTAQDENRLIAERRAKLARLRETGVAFPNDFVPDAHAADLHARYDGLDQEALTAAAVTVKVAGRMMLKRVMGKASFATLQDGSGRIQIYLERGTLGEEAYAAFKQWDIGDIIAIEGPVFKTNKGELSVHANSARLLSKSLRPLPDKFHGVADQELRYRQRYVDLIMTDATRRTFEARSKAVGGIRQTMLNAGFLEVETPMLHPIPGGAAAKPFVTHHNALDMQMFLRIAPELYLKRLIVGGFERVFEINRNFRNEGVSPRHNPEFTMMEFYAAYADYRWLMDFTEDLIRQAAIAATGSAVLSYQDRELDLSQPFDRLTICEAILKYAEGYTQAQLDDPAFVRAELRKLGANVEGPPLARAGLGALQLALFEETAEAKLWRPTYIIDYPVEVSPLARASDTRDGITERFELFITGREIANGFSELNDPEDQAERFRAQVEAKDAGDEEAMYFDADYIRALEYGMPPTGGCGIGIDRLVMLLTDSPSIRDVILFPHLRRED.

Glutamate 416 and glutamate 423 together coordinate Mg(2+).

Belongs to the class-II aminoacyl-tRNA synthetase family. Homodimer. Requires Mg(2+) as cofactor.

The protein localises to the cytoplasm. It carries out the reaction tRNA(Lys) + L-lysine + ATP = L-lysyl-tRNA(Lys) + AMP + diphosphate. The sequence is that of Lysine--tRNA ligase from Bordetella bronchiseptica (strain ATCC BAA-588 / NCTC 13252 / RB50) (Alcaligenes bronchisepticus).